The chain runs to 84 residues: Large ribosomal subunit protein bL27 (84 aa).

This sequence belongs to the bacterial ribosomal protein bL27 family.

The protein is Large ribosomal subunit protein bL27 of Salinispora tropica (strain ATCC BAA-916 / DSM 44818 / JCM 13857 / NBRC 105044 / CNB-440).